The following is a 337-amino-acid chain: Phosphate acyltransferase (337 aa).

Belongs to the PlsX family. As to quaternary structure, homodimer. Probably interacts with PlsY.

Its subcellular location is the cytoplasm. The enzyme catalyses a fatty acyl-[ACP] + phosphate = an acyl phosphate + holo-[ACP]. Its pathway is lipid metabolism; phospholipid metabolism. Functionally, catalyzes the reversible formation of acyl-phosphate (acyl-PO(4)) from acyl-[acyl-carrier-protein] (acyl-ACP). This enzyme utilizes acyl-ACP as fatty acyl donor, but not acyl-CoA. This is Phosphate acyltransferase from Aromatoleum aromaticum (strain DSM 19018 / LMG 30748 / EbN1) (Azoarcus sp. (strain EbN1)).